The sequence spans 483 residues: Glutarate-semialdehyde dehydrogenase (483 aa).

Residues 156–157, 180–183, and 233–234 contribute to the NADP(+) site; these read WN, KPAS, and GS. The active-site Proton acceptor is glutamate 255. An NADP(+)-binding site is contributed by leucine 256. Catalysis depends on cysteine 289, which acts as the Nucleophile. Glutamate 386 contacts NADP(+).

It belongs to the aldehyde dehydrogenase family.

The enzyme catalyses 5-oxopentanoate + NADP(+) + H2O = glutarate + NADPH + 2 H(+). It participates in amino-acid degradation. Catalyzes the conversion of 5-oxopentanoate (glutarate semialdehyde) to glutarate. Involved in L-lysine degradation. In Pseudomonas aeruginosa (strain ATCC 15692 / DSM 22644 / CIP 104116 / JCM 14847 / LMG 12228 / 1C / PRS 101 / PAO1), this protein is Glutarate-semialdehyde dehydrogenase.